We begin with the raw amino-acid sequence, 79 residues long: uncharacterized protein (79 aa).

Positions 4 to 43 (QENEDLRKQLVEASELLKSQAKELKDAHQQQKLALQDFLE) form a coiled coil.

This is an uncharacterized protein from Homo sapiens (Human).